The following is a 953-amino-acid chain: Anion exchange protein 4 (953 aa).

The disordered stretch occupies residues 20–41 (SEQLDGDLGPGSGLDGPSDIDN). 4 helical membrane passes run 385–405 (AVLY…GLLG), 413–433 (GVLE…LMAG), 470–490 (VGIW…SLLV), and 501–521 (FCAL…LNLI). Positions 385–953 (AVLYIYLATV…KAPEINISVN (569 aa)) are membrane (anion exchange). N-linked (GlcNAc...) asparagine glycosylation is found at Asn546 and Asn570. The next 7 helical transmembrane spans lie at 594–614 (VPDI…CAIA), 635–655 (FSSV…GLAT), 682–702 (PWWL…LIFM), 728–748 (LFCV…WYVS), 785–805 (GLVV…LKFI), 807–827 (MPVL…SMQF), and 869–889 (LWVI…LGLV). The span at 916-927 (KTIPENRPEPEH) shows a compositional bias: basic and acidic residues. Residues 916 to 938 (KTIPENRPEPEHLFSGNDSENSE) are disordered. N-linked (GlcNAc...) asparagine glycosylation is found at Asn932 and Asn949.

It belongs to the anion exchanger (TC 2.A.31) family. As to expression, expressed in kidney and gastrointestinal tract. In kidney, it is highly expressed in the cortex, expressed at intermediate level in the outer medulla and not expressed in the inner medulla. It is expressed in the cecum, while it is absent in other segments of gastrointestinal tract. Highly expressed in the cortical collecting duct (CCD). Expressed in both alpha-intercalated cells and beta-intercalated cells in the CCD (at protein level).

The protein localises to the basolateral cell membrane. The catalysed reaction is 2 hydrogencarbonate(out) + chloride(in) + Na(+)(out) = 2 hydrogencarbonate(in) + chloride(out) + Na(+)(in). It carries out the reaction K(+)(in) + 2 hydrogencarbonate(in) + chloride(out) = K(+)(out) + 2 hydrogencarbonate(out) + chloride(in). The enzyme catalyses Li(+)(in) + 2 hydrogencarbonate(in) + chloride(out) = Li(+)(out) + 2 hydrogencarbonate(out) + chloride(in). It catalyses the reaction Rb(+)(in) + 2 hydrogencarbonate(in) + chloride(out) = Rb(+)(out) + 2 hydrogencarbonate(out) + chloride(in). The catalysed reaction is Cs(+)(in) + 2 hydrogencarbonate(in) + chloride(out) = Cs(+)(out) + 2 hydrogencarbonate(out) + chloride(in). Its activity is regulated as follows. 4,4'-diisothiocyanatodihydrostilbene-2,2'- disulfonic acid (H2DIDS) potently inhibits chloride/hydrogencarbonate antiporter activity with 50% inhibition at about 5 uM. Completely inhibits chloride/hydrogencarbonate antiporter activity at 200 uM of 4,4'-diisothiocyano-trans-stilbene-2,2'-disulfonic acid (DIDS). Functionally, electroneutral Cl(-)/HCO3(-) antiporter that favors chloride ion entry and efflux of hydrogencarbonate and sodium ion across the basolateral membrane and may participate in salivary secretion. Also mediates Cl(-)/HCO3(-) exchange activity in the presence of K(+) as well as Cs(+), Li(+), and Rb(+). Does not contribute to Cl(-)/HCO3(-) exchanger in the apical membrane of the upper villous epithelium. The sequence is that of Anion exchange protein 4 from Rattus norvegicus (Rat).